An 868-amino-acid chain; its full sequence is DNA mismatch repair protein MutS (868 aa).

623-630 serves as a coordination point for ATP; it reads GPNMAGKS.

Belongs to the DNA mismatch repair MutS family.

Its function is as follows. This protein is involved in the repair of mismatches in DNA. It is possible that it carries out the mismatch recognition step. This protein has a weak ATPase activity. The sequence is that of DNA mismatch repair protein MutS from Magnetococcus marinus (strain ATCC BAA-1437 / JCM 17883 / MC-1).